Consider the following 335-residue polypeptide: Serpentine receptor class alpha-25 (335 aa).

5 consecutive transmembrane segments (helical) span residues 22 to 42, 151 to 171, 195 to 215, 245 to 265, and 280 to 300; these read IPVKISFLIIATVIFLSFYFA, LLIIQCLLSFGTYYVGLYGVP, FRTVVMVFCIIVIIFVYYLSV, CILIVLQFACILMSSYGVNYI, and LAPFFAGVTYASLCLPLVIYF.

It belongs to the nematode receptor-like protein sra family.

The protein resides in the membrane. The sequence is that of Serpentine receptor class alpha-25 (sra-25) from Caenorhabditis elegans.